Here is an 856-residue protein sequence, read N- to C-terminus: Mechanosensitive ion channel protein 6 (856 aa).

2 disordered regions span residues 45 to 86 (GEGN…DPPT) and 116 to 226 (RGLT…PFAA). Composition is skewed to basic and acidic residues over residues 70 to 85 (QQKD…EDPP) and 129 to 140 (TKRDPVGRRDSR). The span at 155 to 168 (SGNNAPIQRSSSTL) shows a compositional bias: polar residues. Serine 211 is subject to Phosphoserine. Residues 217 to 226 (EEEEDDPFAA) are compositionally biased toward acidic residues. 4 helical membrane passes run 242-262 (IVLE…TLAI), 283-303 (LVLI…VFFI), 323-343 (AVQN…LFDE), and 360-380 (IFVC…LVKV). A Phosphoserine modification is found at serine 462. The next 2 membrane-spanning stretches (helical) occupy residues 615–635 (MVNI…LGIT) and 651–671 (AFIF…LFVI).

Belongs to the MscS (TC 1.A.23) family.

It localises to the membrane. Its function is as follows. Mechanosensitive channel that opens in response to stretch forces in the membrane lipid bilayer. In Arabidopsis thaliana (Mouse-ear cress), this protein is Mechanosensitive ion channel protein 6 (MSL6).